Consider the following 379-residue polypeptide: Cytochrome b (379 aa).

The next 4 helical transmembrane spans lie at 34-54, 78-99, 114-134, and 179-199; these read LGSL…FLTM, WLIR…YLHV, WMTG…GYVL, and FYTF…IHLF. H84 and H98 together coordinate heme b. Heme b-binding residues include H183 and H197. Position 202 (H202) interacts with a ubiquinone. A run of 4 helical transmembrane segments spans residues 227-247, 289-309, 321-341, and 348-368; these read YKDM…CLID, LGGV…PFYN, MNQI…WIGK, and YIMT…FNVH.

Belongs to the cytochrome b family. In terms of assembly, the main subunits of complex b-c1 are: cytochrome b, cytochrome c1 and the Rieske protein. The cofactor is heme b.

It is found in the mitochondrion inner membrane. Functionally, component of the ubiquinol-cytochrome c reductase complex (complex III or cytochrome b-c1 complex) that is part of the mitochondrial respiratory chain. The b-c1 complex mediates electron transfer from ubiquinol to cytochrome c. Contributes to the generation of a proton gradient across the mitochondrial membrane that is then used for ATP synthesis. This Locusta migratoria (Migratory locust) protein is Cytochrome b (MT-CYB).